Reading from the N-terminus, the 332-residue chain is L-lactate dehydrogenase C chain (332 aa).

A Blocked amino end (Ser) modification is found at Ser2. Residues 29 to 57 (GNVG…DTNK) and Arg99 contribute to the NAD(+) site. Residues Arg106, Asn138, and Arg169 each coordinate substrate. Residue Asn138 participates in NAD(+) binding. Catalysis depends on His193, which acts as the Proton acceptor. Thr248 contributes to the substrate binding site.

It belongs to the LDH/MDH superfamily. LDH family. Homotetramer. Interacts with RABL2/RABL2A; binds preferentially to GTP-bound RABL2. As to expression, expressed within the midpiece of sperm tail (at protein level).

It localises to the cytoplasm. The enzyme catalyses (S)-lactate + NAD(+) = pyruvate + NADH + H(+). It functions in the pathway fermentation; pyruvate fermentation to lactate; (S)-lactate from pyruvate: step 1/1. Its function is as follows. Possible role in sperm motility. The protein is L-lactate dehydrogenase C chain (Ldhc) of Mus musculus (Mouse).